A 181-amino-acid polypeptide reads, in one-letter code: Shikimate kinase (181 aa).

ATP is bound at residue 11–16; it reads GAGKSK. Serine 15 lines the Mg(2+) pocket. Residues aspartate 33, arginine 58, and glycine 80 each coordinate substrate. Arginine 128 contributes to the ATP binding site. Residue arginine 144 participates in substrate binding.

This sequence belongs to the shikimate kinase family. As to quaternary structure, monomer. The cofactor is Mg(2+).

Its subcellular location is the cytoplasm. The enzyme catalyses shikimate + ATP = 3-phosphoshikimate + ADP + H(+). It functions in the pathway metabolic intermediate biosynthesis; chorismate biosynthesis; chorismate from D-erythrose 4-phosphate and phosphoenolpyruvate: step 5/7. Functionally, catalyzes the specific phosphorylation of the 3-hydroxyl group of shikimic acid using ATP as a cosubstrate. This chain is Shikimate kinase, found in Leptospira biflexa serovar Patoc (strain Patoc 1 / Ames).